We begin with the raw amino-acid sequence, 462 residues long: Elongation factor 1-alpha 1 (462 aa).

G2 is modified (n,N,N-trimethylglycine). The 238-residue stretch at 5–242 (KTHINIVVIG…DCILPPTRPT (238 aa)) folds into the tr-type G domain. The segment at 14 to 21 (GHVDSGKS) is G1. Residue 14 to 21 (GHVDSGKS) participates in GTP binding. Position 36 is an N6,N6,N6-trimethyllysine; alternate (K36). Position 36 is an N6,N6-dimethyllysine; alternate (K36). An N6-methyllysine; alternate modification is found at K36. Residue K55 is modified to N6,N6-dimethyllysine. The G2 stretch occupies residues 70–74 (GITID). N6,N6,N6-trimethyllysine; by EEF1AKMT1 is present on K79. Residues 91–94 (DAPG) form a G3 region. Position 153 to 156 (153 to 156 (NKMD)) interacts with GTP. The interval 153 to 156 (NKMD) is G4. K165 carries the post-translational modification N6,N6,N6-trimethyllysine; alternate; by EEF1AKMT3. At K165 the chain carries N6,N6-dimethyllysine; alternate; by EEF1AKMT3. An N6-acetyllysine; alternate modification is found at K165. K165 is modified (N6-methyllysine; alternate; by EEF1AKMT3). Position 172 is an N6-acetyllysine (K172). 194-196 (SGW) is a binding site for GTP. The tract at residues 194-196 (SGW) is G5. Residue K273 is modified to N6-acetyllysine. Phosphoserine; by TGFBR1 is present on S300. 5-glutamyl glycerylphosphorylethanolamine is present on E301. N6,N6,N6-trimethyllysine; by EEF1AKMT2 is present on K318. The residue at position 374 (E374) is a 5-glutamyl glycerylphosphorylethanolamine. K385 is covalently cross-linked (Glycyl lysine isopeptide (Lys-Gly) (interchain with G-Cter in ubiquitin)). K392 bears the N6-acetyllysine; alternate mark. The residue at position 392 (K392) is an N6-succinyllysine; alternate. Position 432 is a phosphothreonine; by PASK (T432). K439 is modified (N6-acetyllysine).

Belongs to the TRAFAC class translation factor GTPase superfamily. Classic translation factor GTPase family. EF-Tu/EF-1A subfamily. As to quaternary structure, found in a nuclear export complex with XPO5, EEF1A1, Ran and aminoacylated tRNA. Interacts with PARP1 and TXK. Interacts with KARS1. May interact with ERGIC2. Interacts with IFIT1 (via TPR repeats 4-7). Interacts with DLC1, facilitating distribution to the membrane periphery and ruffles upon growth factor stimulation. Interacts with ZPR1; the interaction occurs in a epidermal growth factor (EGF)-dependent manner. Interacts with PPP1R16B. Interacts with SPHK1 and SPHK2; both interactions increase SPHK1 and SPHK2 kinase activity. Interacts with guanyl-nucleotide exchange factor EEF1B2. Interacts (via middle-region) with HTATIP2 (via N-terminus); the interaction is direct and competes with EEF1A1 binding to guanyl-nucleotide exchange factor EEF1B2, thereby inhibiting GDP for GTP exchange and reactivation of EEF1A1. Interacts with tRNA. In terms of processing, ISGylated. Post-translationally, phosphorylated by TXK. Phosphorylation by PASK increases translation efficiency. Phosphorylated by ROCK2. Phosphorylation by TGFBR1 inhibits translation elongation. Trimethylated at Lys-79 by EEF1AKMT1. Methylated at Lys-165 by EEF1AKMT3, methylation by EEF1AKMT3 is dynamic as well as inducible by stress conditions, such as ER-stress, and plays a regulatory role on mRNA translation. Trimethylated at Lys-318 by EEF1AKMT2. Mono-, di-, and trimethylated at Lys-36 by EEF1AKMT4; trimethylated form is predominant. Methylation by EEF1AKMT4 contributes to the fine-tuning of translation rates for a subset of tRNAs. Trimethylated at Gly-2 by METTL13. Mono- and dimethylated at Lys-55 by METTL13; dimethylated form is predominant. In terms of processing, ubiquitinated at Lys-385 by RNF14 in response to ribosome collisions (ribosome stalling), leading to its degradation by the proteasome and rescue of stalled ribosomes.

The protein resides in the cytoplasm. It localises to the nucleus. It is found in the nucleolus. The protein localises to the cell membrane. It catalyses the reaction GTP + H2O = GDP + phosphate + H(+). In terms of biological role, translation elongation factor that catalyzes the GTP-dependent binding of aminoacyl-tRNA (aa-tRNA) to the A-site of ribosomes during the elongation phase of protein synthesis. Base pairing between the mRNA codon and the aa-tRNA anticodon promotes GTP hydrolysis, releasing the aa-tRNA from EEF1A1 and allowing its accommodation into the ribosome. The growing protein chain is subsequently transferred from the P-site peptidyl tRNA to the A-site aa-tRNA, extending it by one amino acid through ribosome-catalyzed peptide bond formation. Also plays a role in the positive regulation of IFNG transcription in T-helper 1 cells as part of an IFNG promoter-binding complex with TXK and PARP1. Also plays a role in cytoskeleton organization by promoting actin bundling. The polypeptide is Elongation factor 1-alpha 1 (EEF1A1) (Bos taurus (Bovine)).